The chain runs to 274 residues: 3-methyl-2-oxobutanoate hydroxymethyltransferase (274 aa).

Mg(2+) is bound by residues Asp-49 and Asp-88. Residues 49-50 (DS), Asp-88, and Lys-118 each bind 3-methyl-2-oxobutanoate. Glu-120 serves as a coordination point for Mg(2+). Glu-187 (proton acceptor) is an active-site residue.

The protein belongs to the PanB family. As to quaternary structure, homodecamer; pentamer of dimers. It depends on Mg(2+) as a cofactor.

It is found in the cytoplasm. It carries out the reaction 3-methyl-2-oxobutanoate + (6R)-5,10-methylene-5,6,7,8-tetrahydrofolate + H2O = 2-dehydropantoate + (6S)-5,6,7,8-tetrahydrofolate. The protein operates within cofactor biosynthesis; (R)-pantothenate biosynthesis; (R)-pantoate from 3-methyl-2-oxobutanoate: step 1/2. Functionally, catalyzes the reversible reaction in which hydroxymethyl group from 5,10-methylenetetrahydrofolate is transferred onto alpha-ketoisovalerate to form ketopantoate. The polypeptide is 3-methyl-2-oxobutanoate hydroxymethyltransferase (Rhodopseudomonas palustris (strain BisB18)).